The sequence spans 133 residues: ATP synthase epsilon chain (133 aa).

Residues V103–K133 form a disordered region.

It belongs to the ATPase epsilon chain family. As to quaternary structure, F-type ATPases have 2 components, CF(1) - the catalytic core - and CF(0) - the membrane proton channel. CF(1) has five subunits: alpha(3), beta(3), gamma(1), delta(1), epsilon(1). CF(0) has three main subunits: a, b and c.

The protein resides in the cellular thylakoid membrane. In terms of biological role, produces ATP from ADP in the presence of a proton gradient across the membrane. The sequence is that of ATP synthase epsilon chain from Prochlorococcus marinus (strain MIT 9313).